A 455-amino-acid polypeptide reads, in one-letter code: Golgi pH regulator A (455 aa).

5 consecutive transmembrane segments (helical) span residues 5–25, 46–66, 79–99, 114–134, and 150–170; these read IDSS…WLFF, VTFA…LGVL, LCVI…YFIV, CLLW…FPIL, and VGVI…VNCP. Asn180 and Asn243 each carry an N-linked (GlcNAc...) asparagine glycan. 4 consecutive transmembrane segments (helical) span residues 290–310, 343–363, 378–398, and 425–445; these read GYFF…NIVF, ISFI…LITL, VIVL…VLLI, and WFDV…YLAH.

Belongs to the Golgi pH regulator (TC 1.A.38) family. In terms of assembly, homotrimer. Interacts with RABL3; the interaction stabilizes GPR89A. In terms of tissue distribution, ubiquitous.

It is found in the golgi apparatus membrane. It carries out the reaction iodide(out) = iodide(in). It catalyses the reaction chloride(in) = chloride(out). The enzyme catalyses bromide(in) = bromide(out). The catalysed reaction is fluoride(in) = fluoride(out). Its function is as follows. Voltage-gated channel that enables the transfer of monoatomic anions such as iodide, chloride, bromide and fluoride which may function in counter-ion conductance and participates in Golgi acidification. Plays a role in lymphocyte development, probably by acting as a RABL3 effector in hematopoietic cells. This Homo sapiens (Human) protein is Golgi pH regulator A.